A 64-amino-acid chain; its full sequence is Cytochrome c oxidase subunit 5C-2 (64 aa).

Residues 15–34 (SVVKELVIGTVLGLAAGGLW) form a helical membrane-spanning segment.

It belongs to the cytochrome c oxidase subunit 5C family.

It is found in the mitochondrion inner membrane. Functionally, this protein is one of the nuclear-coded polypeptide chains of cytochrome c oxidase, the terminal oxidase in mitochondrial electron transport. The polypeptide is Cytochrome c oxidase subunit 5C-2 (COX5C2) (Helianthus annuus (Common sunflower)).